The chain runs to 198 residues: Recombination protein RecR (198 aa).

A C4-type zinc finger spans residues 57-72 (CAMCNTFTEHEVCETC). One can recognise a Toprim domain in the interval 80-175 (ALLCVVETPG…KVSRLARGVP (96 aa)).

It belongs to the RecR family.

Its function is as follows. May play a role in DNA repair. It seems to be involved in an RecBC-independent recombinational process of DNA repair. It may act with RecF and RecO. The chain is Recombination protein RecR from Janthinobacterium sp. (strain Marseille) (Minibacterium massiliensis).